We begin with the raw amino-acid sequence, 515 residues long: 13S globulin seed storage protein (515 aa).

The signal sequence occupies residues 1–22 (MSTKLILSFSLCLMVLSCSAQA). The igE-binding epitope stretch occupies residues 23–96 (AQLWPWRKGQ…RYVIQPGGLL (74 aa)). 2 disulfide bridges follow: cysteine 47-cysteine 80 and cysteine 123-cysteine 327. The Cupin type-1 1 domain maps to 52-272 (LTASEPSRRV…FRDVDRETIS (221 aa)). The interval 97–172 (LPSYSNAPYI…REGDVIPSPA (76 aa)) is igE-binding epitope with a very strong IgE-binding activity. 3 disordered regions span residues 123–156 (CPET…GDQH), 210–241 (LAGQ…ESDD), and 295–320 (PEDS…GRSN). Composition is skewed to basic and acidic residues over residues 141–156 (HSRE…GDQH), 217–239 (GREE…SRES), and 295–316 (PEDS…ERGS). 2 igE-binding epitope regions span residues 173-248 (GVVQ…LIGA) and 249-320 (NILS…GRSN). The Cupin type-1 2 domain maps to 333-482 (QNVNRPSHAD…SYDISTEEAY (150 aa)). The segment at 347 to 387 (RAGRINTVNSNNLPILEFLQLSAQHVVLYKNAIIGPRWNLN) is igE-binding epitope with a strong IgE-binding activity. IgE-binding epitope stretches follow at residues 407 to 457 (EGKS…PIAG), 440 to 476 (EWVE…SYDI), and 475 to 511 (DIST…ERER).

This sequence belongs to the 11S seed storage protein (globulins) family. Homohexamer. In terms of processing, proteolytically processed from a single precursor to produce an acidic and a basic chain that are linked by a disulfide bond. As to expression, expressed in seeds (at protein level).

In terms of biological role, seed storage protein. The polypeptide is 13S globulin seed storage protein (Fagopyrum tataricum (Tartarian buckwheat)).